Consider the following 227-residue polypeptide: ATP synthase F(0) complex subunit a (227 aa).

The next 6 membrane-spanning stretches (helical) occupy residues P12 to P32, W69 to L89, Q98 to L118, I139 to V159, L170 to S190, and I196 to V216.

Belongs to the ATPase A chain family. As to quaternary structure, component of the ATP synthase complex composed at least of ATP5F1A/subunit alpha, ATP5F1B/subunit beta, ATP5MC1/subunit c (homooctomer), MT-ATP6/subunit a, MT-ATP8/subunit 8, ATP5ME/subunit e, ATP5MF/subunit f, ATP5MG/subunit g, ATP5MK/subunit k, ATP5MJ/subunit j, ATP5F1C/subunit gamma, ATP5F1D/subunit delta, ATP5F1E/subunit epsilon, ATP5PF/subunit F6, ATP5PB/subunit b, ATP5PD/subunit d, ATP5PO/subunit OSCP. ATP synthase complex consists of a soluble F(1) head domain (subunits alpha(3) and beta(3)) - the catalytic core - and a membrane F(0) domain - the membrane proton channel (subunits c, a, 8, e, f, g, k and j). These two domains are linked by a central stalk (subunits gamma, delta, and epsilon) rotating inside the F1 region and a stationary peripheral stalk (subunits F6, b, d, and OSCP). Interacts with DNAJC30; interaction is direct.

The protein localises to the mitochondrion inner membrane. It catalyses the reaction H(+)(in) = H(+)(out). Subunit a, of the mitochondrial membrane ATP synthase complex (F(1)F(0) ATP synthase or Complex V) that produces ATP from ADP in the presence of a proton gradient across the membrane which is generated by electron transport complexes of the respiratory chain. ATP synthase complex consist of a soluble F(1) head domain - the catalytic core - and a membrane F(1) domain - the membrane proton channel. These two domains are linked by a central stalk rotating inside the F(1) region and a stationary peripheral stalk. During catalysis, ATP synthesis in the catalytic domain of F(1) is coupled via a rotary mechanism of the central stalk subunits to proton translocation. With the subunit c (ATP5MC1), forms the proton-conducting channel in the F(0) domain, that contains two crucial half-channels (inlet and outlet) that facilitate proton movement from the mitochondrial intermembrane space (IMS) into the matrix. Protons are taken up via the inlet half-channel and released through the outlet half-channel, following a Grotthuss mechanism. The chain is ATP synthase F(0) complex subunit a from Gallus gallus (Chicken).